A 256-amino-acid chain; its full sequence is NH(3)-dependent NAD(+) synthetase (256 aa).

29–36 (GISGGIDS) is a binding site for ATP. Asp-35 lines the Mg(2+) pocket. Residue Arg-115 coordinates deamido-NAD(+). Thr-135 is an ATP binding site. Glu-140 provides a ligand contact to Mg(2+). Residues Lys-148 and Asp-155 each contribute to the deamido-NAD(+) site. Positions 164 and 186 each coordinate ATP. 245 to 246 (HK) contributes to the deamido-NAD(+) binding site.

It belongs to the NAD synthetase family. Homodimer.

It carries out the reaction deamido-NAD(+) + NH4(+) + ATP = AMP + diphosphate + NAD(+) + H(+). Its pathway is cofactor biosynthesis; NAD(+) biosynthesis; NAD(+) from deamido-NAD(+) (ammonia route): step 1/1. Its function is as follows. Catalyzes the ATP-dependent amidation of deamido-NAD to form NAD. Uses ammonia as a nitrogen source. The polypeptide is NH(3)-dependent NAD(+) synthetase (Methanosarcina acetivorans (strain ATCC 35395 / DSM 2834 / JCM 12185 / C2A)).